Reading from the N-terminus, the 2159-residue chain is Calpain-type cysteine protease DEK1 (2159 aa).

The signal sequence occupies residues 1–33 (MEGEGHHGVVLACSICGFLFAVLSPFSFWVLWA). Residues 34–70 (VNWRPWRLYSWIYARKWPTYVQGPQLSTLCSLLTLCA) lie on the Extracellular side of the membrane. Residues 71 to 91 (WLVVISPIAVLLVWGSVLIAL) form a helical membrane-spanning segment. Residues 92-95 (MERN) lie on the Cytoplasmic side of the membrane. The helical transmembrane segment at 96–116 (IIGLAVIMAGVALLLSFYSIM) threads the bilayer. Topologically, residues 117–127 (LWWRTQWQSSE) are extracellular. Residues 128–148 (AVAYLLLLAVCLLCAYDFCAI) traverse the membrane as a helical segment. Over 149–164 (YVTAGASASELNSPSG) the chain is Cytoplasmic. The chain crosses the membrane as a helical span at residues 165–185 (FFFGVSVISLAINMLFICKIL). Residues 186–236 (FNVSGFDVDEYVRRSYKFAYSDCVEVAPVSCSPEPPDPSELYMTKSSRVKH) lie on the Extracellular side of the membrane. The chain crosses the membrane as a helical span at residues 237 to 257 (LGLLYISSLLVLVGYSILYGL). At 258–264 (TSKEARW) the chain is on the cytoplasmic side. The chain crosses the membrane as a helical span at residues 265 to 285 (LGALTSVAVVILDWNLGLCSF). Over 286-294 (RFELLKSRM) the chain is Extracellular. The chain crosses the membrane as a helical span at residues 295-315 (IVLFVAGTSRAFLVSFGVHYW). The Cytoplasmic portion of the chain corresponds to 316–320 (YLGHC). A helical transmembrane segment spans residues 321-341 (ISYAFVASVLLSAAVSSWLSI). Over 342 to 623 (SNPSVARIDA…LIFHHLAGSP (282 aa)) the chain is Extracellular. Residues 365–409 (RKGQNSSSNSSEGCGSSVKRSSGSVEAGQNGNAMDSMYRSNSQSD) form a disordered region. Residues 369-381 (NSSSNSSEGCGSS) show a composition bias toward low complexity. A compositionally biased stretch (polar residues) spans 382-409 (VKRSSGSVEAGQNGNAMDSMYRSNSQSD). Residues 624–644 (IRAFIVFTVMFIIETATVAIY) traverse the membrane as a helical segment. Over 645 to 660 (RPETIKVINATHEQFE) the chain is Cytoplasmic. The helical transmembrane segment at 661 to 681 (FGFSILLLSPVVCSIMAFIWS) threads the bilayer. The Extracellular segment spans residues 682-694 (LRAEEMLMTSKPQ). Residues 695 to 715 (KYGFIAWLLSTCVGLFLSFLS) traverse the membrane as a helical segment. At 716 to 719 (KSSV) the chain is on the cytoplasmic side. Residues 720–740 (ILGLSLTVPLMVACLSFAVPI) traverse the membrane as a helical segment. The Extracellular segment spans residues 741–770 (WIRNGYSFWIPGREFANRENVSQAPGEKER). A helical transmembrane segment spans residues 771 to 791 (ALFVITIAVFTASIIGLGAIV). Residues 792 to 822 (SAKPLDALGYKGWDADKNSSYSPYATSMYLG) lie on the Cytoplasmic side of the membrane. A helical transmembrane segment spans residues 823–843 (WALSSTIAVITTGLIPIVAWF). At 844–853 (ATYRFSPSSA) the chain is on the extracellular side. A helical transmembrane segment spans residues 854-874 (ICVGLFATVLVSFCGASYWGV). Residues 875–887 (VNSREDGVPLKAD) lie on the Cytoplasmic side of the membrane. Residues 888 to 908 (FLAALLPLLCIPAFFSLFTGL) form a helical membrane-spanning segment. Topologically, residues 909–921 (YKWKDDDWKISRG) are extracellular. The helical transmembrane segment at 922 to 942 (VYLFVGMGMLLLFGAVAAVIV) threads the bilayer. Topologically, residues 943-946 (TIRP) are cytoplasmic. A helical membrane pass occupies residues 947-967 (WTVGVACLVAILFLVFVIGVI). At 968–981 (HYWTSNNFYLTRTQ) the chain is on the extracellular side. Residues 982–1002 (MLLVCSIAFLLALAAFLMGLF) traverse the membrane as a helical segment. The Cytoplasmic segment spans residues 1003–1016 (HGKPFVGASIGYFS). A helical transmembrane segment spans residues 1017-1037 (FIFLLTGRALTVLLSPPIVVY). Residues 1038-1060 (SPRVLPVYVYDAHADSAKNVSYA) are Extracellular-facing. Residues 1061–1081 (FLILYGIALATEVWGVIASLI) form a helical membrane-spanning segment. Residues 1082-2159 (MNPPFVGAGV…SKASIRLEAV (1078 aa)) lie on the Cytoplasmic side of the membrane. Phosphoserine occurs at positions 1371 and 1376. One can recognise a Calpain catalytic 1 domain in the interval 1417–1609 (TGRHCGELDL…MSPAEYGFFD (193 aa)). S1665 carries the post-translational modification Phosphoserine. The Calpain catalytic 2 domain occupies 1703-2005 (NFTDQEFPPE…FRSIYVCRVY (303 aa)). Active-site residues include C1769, H1927, and N1947.

The protein belongs to the peptidase C2 family. Post-translationally, autocatalytic proteolytic cleavage leading to the production of mainly cytoplasmic localized subproducts of about 85 and 120 kDa. As to expression, expressed in most tissues at low levels ranging from 30 to 55 ppm. Present in all endosperm cells at transcript level, but confined to aleurones at protein level.

The protein localises to the endoplasmic reticulum membrane. Its subcellular location is the cytoplasm. The protein resides in the cell membrane. It is found in the endosome membrane. In terms of biological role, essential protease involved in epiderm development. Required for aleurone cell development in the endosperm probably by maintaining and restricting the aleurone and embryonic epidermal L1 cell-layer fates as well as meristems organization. Involved in the maintenance of adaxial/abaxial axis information in developing leaves, probably by regulating cell proliferation and expansion. Does not need calcium ions to be active. This chain is Calpain-type cysteine protease DEK1 (DEK1), found in Zea mays (Maize).